The primary structure comprises 201 residues: Putative manganese efflux pump MntP 2 (201 aa).

6 helical membrane-spanning segments follow: residues 3 to 23 (LISV…VSIT), 39 to 59 (IGLF…SIGI), 65 to 85 (IAAL…GKMI), 116 to 136 (LILL…SFAF), 141 to 161 (IINT…IGVM), and 176 to 196 (ILGG…HTNI).

It belongs to the MntP (TC 9.B.29) family.

It localises to the cell membrane. Functionally, probably functions as a manganese efflux pump. This Clostridium botulinum (strain Langeland / NCTC 10281 / Type F) protein is Putative manganese efflux pump MntP 2.